The following is a 520-amino-acid chain: Probable protein phosphatase 2C 39 (520 aa).

The PPM-type phosphatase domain occupies 160–507 (FLTSTEIKMA…DDVTIIVIIL (348 aa)). 4 residues coordinate Mn(2+): Asp-195, Gly-196, Asp-435, and Asp-498.

Belongs to the PP2C family. It depends on Mg(2+) as a cofactor. The cofactor is Mn(2+).

The enzyme catalyses O-phospho-L-seryl-[protein] + H2O = L-seryl-[protein] + phosphate. It catalyses the reaction O-phospho-L-threonyl-[protein] + H2O = L-threonyl-[protein] + phosphate. This is Probable protein phosphatase 2C 39 from Oryza sativa subsp. japonica (Rice).